Here is a 1703-residue protein sequence, read N- to C-terminus: Ferlin 2 (1703 aa).

C2 domains lie at 18-141 (IRKL…KTWL) and 207-332 (KQPV…FRWF). Disordered stretches follow at residues 913–937 (NQFN…FDDN), 970–1025 (NLDK…TSST), and 1194–1228 (KNKS…QKLG). A compositionally biased stretch (acidic residues) spans 916–928 (NDDDEGDNEDEQD). Positions 979–991 (QPQSLKNLQNLDS) are enriched in polar residues. Residues 993–1009 (SKADQKSQFDLKSESKS) show a composition bias toward basic and acidic residues. Positions 1198-1209 (NRSSMSLSMRSS) are enriched in low complexity. The region spanning 1466–1595 (VARIIPPSTI…LKKLKEGIVF (130 aa)) is the C2 3 domain. The disordered stretch occupies residues 1628 to 1651 (AAESDPVGEGQNEPNKDPILEKPK). The segment covering 1641–1651 (PNKDPILEKPK) has biased composition (basic and acidic residues). The helical transmembrane segment at 1681 to 1701 (FAGIFVSIVTMMILFVKPGIL) threads the bilayer.

Belongs to the ferlin family.

It is found in the membrane. Regulates mucocyst exocytosis. In Tetrahymena thermophila (strain SB210), this protein is Ferlin 2.